Reading from the N-terminus, the 249-residue chain is Methylthioribulose-1-phosphate dehydratase (249 aa).

Cysteine 102 is a binding site for substrate. Residues histidine 120 and histidine 122 each contribute to the Zn(2+) site. The Proton donor/acceptor role is filled by glutamate 148. Histidine 205 serves as a coordination point for Zn(2+).

This sequence belongs to the aldolase class II family. MtnB subfamily. Requires Zn(2+) as cofactor.

Its subcellular location is the cytoplasm. The enzyme catalyses 5-(methylsulfanyl)-D-ribulose 1-phosphate = 5-methylsulfanyl-2,3-dioxopentyl phosphate + H2O. It participates in amino-acid biosynthesis; L-methionine biosynthesis via salvage pathway; L-methionine from S-methyl-5-thio-alpha-D-ribose 1-phosphate: step 2/6. Functionally, catalyzes the dehydration of methylthioribulose-1-phosphate (MTRu-1-P) into 2,3-diketo-5-methylthiopentyl-1-phosphate (DK-MTP-1-P). The polypeptide is Methylthioribulose-1-phosphate dehydratase (Botryotinia fuckeliana (strain B05.10) (Noble rot fungus)).